We begin with the raw amino-acid sequence, 103 residues long: Large ribosomal subunit protein bL21 (103 aa).

It belongs to the bacterial ribosomal protein bL21 family. Part of the 50S ribosomal subunit. Contacts protein L20.

This protein binds to 23S rRNA in the presence of protein L20. This Paracidovorax citrulli (strain AAC00-1) (Acidovorax citrulli) protein is Large ribosomal subunit protein bL21.